The chain runs to 104 residues: Large ribosomal subunit protein eL42 (104 aa).

Belongs to the eukaryotic ribosomal protein eL42 family. As to quaternary structure, component of the large ribosomal subunit. Mature ribosomes consist of a small (40S) and a large (60S) subunit. The 40S subunit contains about 32 different proteins and 1 molecule of RNA (18S). The 60S subunit contains about 42 different proteins and 3 molecules of RNA (28S, 5.8S and 5S).

It localises to the cytoplasm. Component of the ribosome, a large ribonucleoprotein complex responsible for the synthesis of proteins in the cell. The small ribosomal subunit (SSU) binds messenger RNAs (mRNAs) and translates the encoded message by selecting cognate aminoacyl-transfer RNA (tRNA) molecules. The large subunit (LSU) contains the ribosomal catalytic site termed the peptidyl transferase center (PTC), which catalyzes the formation of peptide bonds, thereby polymerizing the amino acids delivered by tRNAs into a polypeptide chain. The nascent polypeptides leave the ribosome through a tunnel in the LSU and interact with protein factors that function in enzymatic processing, targeting, and the membrane insertion of nascent chains at the exit of the ribosomal tunnel. The protein is Large ribosomal subunit protein eL42 of Plasmodium falciparum (isolate 3D7).